We begin with the raw amino-acid sequence, 149 residues long: Large ribosomal subunit protein uL15 (149 aa).

2 stretches are compositionally biased toward basic residues: residues 1-14 and 21-30; these read MPTH…HRGH and RVGKHRKHPG. The disordered stretch occupies residues 1 to 42; the sequence is MPTHLSKTRKHRGHVSAGHGRVGKHRKHPGGRGLAGGQHHHR.

Belongs to the universal ribosomal protein uL15 family.

In Blumeria hordei (Barley powdery mildew), this protein is Large ribosomal subunit protein uL15.